A 173-amino-acid chain; its full sequence is Myeloid-derived growth factor (173 aa).

Positions 1–31 (MAAPSGGWNGVGASLWAALLLGAVALRPAEA) are cleaved as a signal peptide.

The protein belongs to the MYDGF family. Expressed in eosinophils (at protein level). Expressed in bone marrow cells. Expressed in synovial tissue. Found in synovial fluid of patients with arthropaties.

It is found in the secreted. It localises to the endoplasmic reticulum-Golgi intermediate compartment. The protein resides in the endoplasmic reticulum. Its subcellular location is the golgi apparatus. Its function is as follows. Bone marrow-derived monocyte and paracrine-acting protein that promotes cardiac myocyte survival and adaptive angiogenesis for cardiac protection and/or repair after myocardial infarction (MI). Stimulates endothelial cell proliferation through a MAPK1/3-, STAT3- and CCND1-mediated signaling pathway. Inhibits cardiac myocyte apoptosis in a PI3K/AKT-dependent signaling pathway. Involved in endothelial cell proliferation and angiogenesis. This Homo sapiens (Human) protein is Myeloid-derived growth factor.